Consider the following 906-residue polypeptide: Cadherin-2 (906 aa).

The signal sequence occupies residues 1-25 (MCRIVGAPRTLLPLLAALLQASVDA). A propeptide spanning residues 26 to 159 (SGEISLCKTG…HNGYLQRQKR (134 aa)) is cleaved from the precursor. Serine 96 and serine 135 each carry phosphoserine. Cadherin domains are found at residues 160–267 (DWVI…RPEF), 268–392 (LHQV…GEVP), 393–497 (ENRV…NPYF), 498–603 (APNP…DNAP), and 604–714 (QVLP…DVDR). The Extracellular portion of the chain corresponds to 160–724 (DWVIPPINLP…IVGAGLGTGA (565 aa)). Glutamate 170 contributes to the Ca(2+) binding site. Asparagine 190 carries N-linked (GlcNAc...) asparagine glycosylation. Positions 226, 228, 259, 260, 261, 262, and 263 each coordinate Ca(2+). Asparagine 273 carries an N-linked (GlcNAc...) asparagine glycan. Residues aspartate 293, aspartate 295, and asparagine 301 each contribute to the Ca(2+) site. Residue asparagine 325 is glycosylated (N-linked (GlcNAc...) asparagine). A Ca(2+)-binding site is contributed by aspartate 353. Asparagine 357, asparagine 402, asparagine 572, asparagine 622, asparagine 651, and asparagine 692 each carry an N-linked (GlcNAc...) asparagine glycan. The chain crosses the membrane as a helical span at residues 725–746 (IIAILLCIIILLILVLMFVVWM). Residues 747 to 906 (KRRDKERQAK…LADMYGGGDD (160 aa)) lie on the Cytoplasmic side of the membrane. Positions 863 to 880 (SGSTAGSLSSLNSSSSGG) are enriched in low complexity. A disordered region spans residues 863 to 884 (SGSTAGSLSSLNSSSSGGEQDY).

Homodimer (via extracellular region). Can also form heterodimers with other cadherins (via extracellular region). Dimerization occurs in trans, i.e. with a cadherin chain from another cell. Interacts with CDCP1. Interacts with PCDH8; this complex may also include TAOK2. The interaction with PCDH8 may lead to internalization through TAOK2/p38 MAPK pathway. Identified in a complex containing FGFR4, NCAM1, CDH2, PLCG1, FRS2, SRC, SHC1, GAP43 and CTTN. May interact with OBSCN (via protein kinase domain 2). Interacts with FBXO45. Cleaved by MMP24. Ectodomain cleavage leads to the generation of a soluble 90 kDa N-terminal soluble fragment and a 45 kDa membrane-bound C-terminal fragment 1 (CTF1), which is further cleaved by gamma-secretase into a 35 kDa. Cleavage in neural stem cells by MMP24 affects CDH2-mediated anchorage of neural stem cells to ependymocytes in the adult subependymal zone, leading to modulate neural stem cell quiescence. In terms of processing, may be phosphorylated by OBSCN. As to expression, detected in liver, kidney, heart and brain capillaries.

The protein localises to the cell membrane. The protein resides in the sarcolemma. It is found in the cell junction. Its subcellular location is the cell surface. It localises to the desmosome. The protein localises to the adherens junction. In terms of biological role, calcium-dependent cell adhesion protein; preferentially mediates homotypic cell-cell adhesion by dimerization with a CDH2 chain from another cell. Cadherins may thus contribute to the sorting of heterogeneous cell types. Acts as a regulator of neural stem cells quiescence by mediating anchorage of neural stem cells to ependymocytes in the adult subependymal zone: upon cleavage by MMP24, CDH2-mediated anchorage is affected, leading to modulate neural stem cell quiescence. Plays a role in cell-to-cell junction formation between pancreatic beta cells and neural crest stem (NCS) cells, promoting the formation of processes by NCS cells. Required for proper neurite branching. Required for pre- and postsynaptic organization. CDH2 may be involved in neuronal recognition mechanism. In hippocampal neurons, may regulate dendritic spine density. The sequence is that of Cadherin-2 (CDH2) from Bos taurus (Bovine).